The sequence spans 931 residues: Beta-mannosidase A (931 aa).

The N-terminal stretch at 1 to 21 (MRHSIGLAAALLAPTLPVALG) is a signal peptide. 7 N-linked (GlcNAc...) asparagine glycosylation sites follow: N40, N79, N247, N282, N316, N326, and N347. E479 (proton donor) is an active-site residue. Residues N550, N608, N658, N738, N790, N798, N830, and N918 are each glycosylated (N-linked (GlcNAc...) asparagine).

Belongs to the glycosyl hydrolase 2 family. Beta-mannosidase A subfamily. As to quaternary structure, homodimer.

The protein localises to the secreted. It carries out the reaction Hydrolysis of terminal, non-reducing beta-D-mannose residues in beta-D-mannosides.. It participates in glycan metabolism; N-glycan degradation. In terms of biological role, exoglycosidase that cleaves the single beta-linked mannose residue from the non-reducing end of beta-mannosidic oligosaccharides of various complexity and length. Involved in the degradation of polymeric mannan and galactomannan. The chain is Beta-mannosidase A (mndA) from Aspergillus niger (strain ATCC MYA-4892 / CBS 513.88 / FGSC A1513).